We begin with the raw amino-acid sequence, 194 residues long: Nucleoside triphosphate pyrophosphatase (194 aa).

Asp71 functions as the Proton acceptor in the catalytic mechanism.

Belongs to the Maf family. A divalent metal cation serves as cofactor.

It is found in the cytoplasm. It catalyses the reaction a ribonucleoside 5'-triphosphate + H2O = a ribonucleoside 5'-phosphate + diphosphate + H(+). It carries out the reaction a 2'-deoxyribonucleoside 5'-triphosphate + H2O = a 2'-deoxyribonucleoside 5'-phosphate + diphosphate + H(+). Its function is as follows. Nucleoside triphosphate pyrophosphatase. May have a dual role in cell division arrest and in preventing the incorporation of modified nucleotides into cellular nucleic acids. The sequence is that of Nucleoside triphosphate pyrophosphatase from Paramagnetospirillum magneticum (strain ATCC 700264 / AMB-1) (Magnetospirillum magneticum).